A 215-amino-acid polypeptide reads, in one-letter code: Probable glutathione S-transferase GSTF2 (215 aa).

Positions 2 to 83 (APMKLYGSTL…YVCRKNKPEL (82 aa)) constitute a GST N-terminal domain. Glutathione-binding positions include S12, 41-42 (HK), 54-55 (QV), and 67-68 (ES). The region spanning 88–215 (DLKESAMVDV…KVASLMKPPA (128 aa)) is the GST C-terminal domain.

It belongs to the GST superfamily. Phi family. In terms of tissue distribution, constitutively expressed in roots. Expressed in anthers, callus, panicles, sheaths and stems (at protein level).

It catalyses the reaction RX + glutathione = an S-substituted glutathione + a halide anion + H(+). In terms of biological role, conjugation of reduced glutathione to a wide number of exogenous and endogenous hydrophobic electrophiles. The sequence is that of Probable glutathione S-transferase GSTF2 (GSTF2) from Oryza sativa subsp. japonica (Rice).